Reading from the N-terminus, the 366-residue chain is Erythronate-4-phosphate dehydrogenase (366 aa).

Substrate is bound by residues serine 46 and threonine 67. Residues aspartate 147 and threonine 175 each coordinate NAD(+). Arginine 208 is an active-site residue. Aspartate 228 is an NAD(+) binding site. Glutamate 233 is a catalytic residue. The active-site Proton donor is histidine 250. Residue glycine 253 coordinates NAD(+). Residue tyrosine 254 coordinates substrate.

This sequence belongs to the D-isomer specific 2-hydroxyacid dehydrogenase family. PdxB subfamily. In terms of assembly, homodimer.

It localises to the cytoplasm. The enzyme catalyses 4-phospho-D-erythronate + NAD(+) = (R)-3-hydroxy-2-oxo-4-phosphooxybutanoate + NADH + H(+). It functions in the pathway cofactor biosynthesis; pyridoxine 5'-phosphate biosynthesis; pyridoxine 5'-phosphate from D-erythrose 4-phosphate: step 2/5. Catalyzes the oxidation of erythronate-4-phosphate to 3-hydroxy-2-oxo-4-phosphonooxybutanoate. The protein is Erythronate-4-phosphate dehydrogenase of Coxiella burnetii (strain RSA 331 / Henzerling II).